The sequence spans 202 residues: CASP-like protein 2B2 (202 aa).

The Cytoplasmic portion of the chain corresponds to 1-29 (MSYLGVGVSPGNVPVYHGMNLKVIDRRVR). Residues 30–50 (LAELVLRCVICALGVLAAVLV) form a helical membrane-spanning segment. Over 51 to 72 (GTDTQVKEIFSIQKKARFTDMK) the chain is Extracellular. The helical transmembrane segment at 73–93 (ALVFLVVANGIAAAYSLVQGV) threads the bilayer. The Cytoplasmic portion of the chain corresponds to 94-118 (RCVVGMVKGSVLFSKPLAWVIFSGD). A helical membrane pass occupies residues 119–139 (QMMAYLTLSAVAAAVQSASFA). Topologically, residues 140–164 (KLGQPDLQWMKICNMYGKFCNQVGE) are extracellular. A helical transmembrane segment spans residues 165-185 (GIASALLVSVSMVVLSCISSF). Residues 186 to 202 (SLFRLYGGNKGKDGARW) are Cytoplasmic-facing.

The protein belongs to the Casparian strip membrane proteins (CASP) family. Homodimer and heterodimers.

The protein localises to the cell membrane. This is CASP-like protein 2B2 from Populus trichocarpa (Western balsam poplar).